A 720-amino-acid chain; its full sequence is Polyribonucleotide nucleotidyltransferase (720 aa).

Positions 487 and 493 each coordinate Mg(2+). One can recognise a KH domain in the interval 554–613 (PRIETFKIPTDKIREVIGTGGKVIREIVEKTGAKVNIEDDGTVKVASSDGEAMKAAIKWI). The S1 motif domain maps to 623 to 691 (GQIYDGTVVK…DRGKTRLSMK (69 aa)). Positions 692-720 (AVDQTTGEDLEAKQKAEGGAEAPREAAGE) are disordered. The span at 701–720 (LEAKQKAEGGAEAPREAAGE) shows a compositional bias: basic and acidic residues.

Belongs to the polyribonucleotide nucleotidyltransferase family. It depends on Mg(2+) as a cofactor.

The protein localises to the cytoplasm. It catalyses the reaction RNA(n+1) + phosphate = RNA(n) + a ribonucleoside 5'-diphosphate. Its function is as follows. Involved in mRNA degradation. Catalyzes the phosphorolysis of single-stranded polyribonucleotides processively in the 3'- to 5'-direction. The polypeptide is Polyribonucleotide nucleotidyltransferase (Bradyrhizobium sp. (strain BTAi1 / ATCC BAA-1182)).